The following is a 492-amino-acid chain: Putative cytochrome P450 136 (492 aa).

Cysteine 439 serves as a coordination point for heme.

It belongs to the cytochrome P450 family. It depends on heme as a cofactor.

The polypeptide is Putative cytochrome P450 136 (cyp136) (Mycobacterium tuberculosis (strain CDC 1551 / Oshkosh)).